The primary structure comprises 592 residues: Aspartate--tRNA ligase (592 aa).

E171 serves as a coordination point for L-aspartate. Residues 195–198 (QLFK) form an aspartate region. R217 lines the L-aspartate pocket. ATP is bound by residues 217-219 (RDE) and Q226. Residue H448 participates in L-aspartate binding. An ATP-binding site is contributed by E482. R489 contacts L-aspartate. 534-537 (GLDR) contributes to the ATP binding site.

Belongs to the class-II aminoacyl-tRNA synthetase family. Type 1 subfamily. In terms of assembly, homodimer.

Its subcellular location is the cytoplasm. The catalysed reaction is tRNA(Asp) + L-aspartate + ATP = L-aspartyl-tRNA(Asp) + AMP + diphosphate. Its function is as follows. Catalyzes the attachment of L-aspartate to tRNA(Asp) in a two-step reaction: L-aspartate is first activated by ATP to form Asp-AMP and then transferred to the acceptor end of tRNA(Asp). The sequence is that of Aspartate--tRNA ligase from Vibrio campbellii (strain ATCC BAA-1116).